A 225-amino-acid chain; its full sequence is ATP-dependent Clp protease proteolytic subunit (225 aa).

Ser-123 acts as the Nucleophile in catalysis. His-148 is a catalytic residue.

Belongs to the peptidase S14 family. As to quaternary structure, fourteen ClpP subunits assemble into 2 heptameric rings which stack back to back to give a disk-like structure with a central cavity, resembling the structure of eukaryotic proteasomes.

The protein localises to the cytoplasm. The catalysed reaction is Hydrolysis of proteins to small peptides in the presence of ATP and magnesium. alpha-casein is the usual test substrate. In the absence of ATP, only oligopeptides shorter than five residues are hydrolyzed (such as succinyl-Leu-Tyr-|-NHMec, and Leu-Tyr-Leu-|-Tyr-Trp, in which cleavage of the -Tyr-|-Leu- and -Tyr-|-Trp bonds also occurs).. In terms of biological role, cleaves peptides in various proteins in a process that requires ATP hydrolysis. Has a chymotrypsin-like activity. Plays a major role in the degradation of misfolded proteins. The sequence is that of ATP-dependent Clp protease proteolytic subunit from Chlorobium chlorochromatii (strain CaD3).